Reading from the N-terminus, the 527-residue chain is MDVKNSPSSLNSPVSYNCGQSILPLEPGPIYLPSSYVESRHEYSAVTFYSPAVMNYSIPNNSEDGPGRQTTSPNVLWPTPGHLSPLAIHCQSSLLYAEPQKSPWCETRSLEHTFPVNRETLKRKASGSSCASPVSSPSSKRDAHFCAVCSDYASGYHYGVWSCEGCKAFFKRSIQGHNDYICPATNQCTIDKNRRKSCQACRLRKCYEVGMVKCGSRRERCGYRIVRRQRNSDEQLHCLSKTKRNGAPMTRVKELLLSALSPEQLVLTLLEAEPPHVLMSRPSAPFTEASMMMSLTKLADKELVHMISWAKKIPGFVELSLYDQVRLLESCWLEVLMVGLMWRSIDHPGKLIFAPDLVLDRDEGKCVEGILEIFDMLLATTSRFRELKLQHKEYLCVKAMILLNSSMYPSATASQEADSGRKLTHLLNAVTDALVWVIAKSGMSSQQQSMRLANLLMLLSHVRHASNKGMEHLLNMKCKNVVPVYDLLLEMLNAHTLRSNKPLVTRSERNLAEDSESKEGSQKPQAQ.

Positions 1 to 145 (MDVKNSPSSL…SPSSKRDAHF (145 aa)) are modulating. Phosphoserine; by MAPK occurs at positions 84 and 102. 2 consecutive NR C4-type zinc fingers follow at residues 146-166 (CAVC…CEGC) and 182-206 (CPAT…LRKC). Positions 146 to 211 (CAVCSDYASG…RLRKCYEVGM (66 aa)) form a DNA-binding region, nuclear receptor. One can recognise an NR LBD domain in the interval 261–495 (SPEQLVLTLL…DLLLEMLNAH (235 aa)). The tract at residues 505–527 (TRSERNLAEDSESKEGSQKPQAQ) is disordered. Residues 506-521 (RSERNLAEDSESKEGS) are compositionally biased toward basic and acidic residues.

It belongs to the nuclear hormone receptor family. NR3 subfamily. As to quaternary structure, binds DNA as a homodimer. Can form a heterodimer with ESR1. Interacts with NCOA1, NCOA3, NCOA5 and NCOA6 coactivators, leading to a strong increase of transcription of target genes. Interacts with UBE1C and AKAP13. Interacts with DNTTIP2. Interacts with CCDC62 in the presence of estradiol/E2; this interaction seems to enhance the transcription of target genes. Interacts with DNAAF4. Interacts with PRMT2. Interacts with CCAR2 (via N-terminus) in a ligand-independent manner. Interacts with RBM39, in the presence of estradiol (E2). Interacts with STUB1/CHIP. In terms of processing, phosphorylation at Ser-84 and Ser-102 recruits NCOA1.

It localises to the nucleus. Functionally, nuclear hormone receptor. Binds estrogens with an affinity similar to that of ESR1/ER-alpha, and activates expression of reporter genes containing estrogen response elements (ERE) in an estrogen-dependent manner. The protein is Estrogen receptor beta (ESR2) of Ovis aries (Sheep).